The sequence spans 477 residues: ETS translocation variant 1 (477 aa).

S94 is subject to Phosphoserine. The segment at 128–179 (PQVGMRPSNPPTPSSTPVSPLHHASPNTAHTPKPDRAFPAHLPPSQSIPDST) is disordered. Phosphoserine; by RPS6KA1 and RPS6KA5 occurs at positions 191 and 216. A Glycyl lysine isopeptide (Lys-Gly) (interchain with G-Cter in SUMO2) cross-link involves residue K317. The ETS DNA-binding region spans 335–415 (LQLWQFLVAL…AGERYVYKFV (81 aa)).

The protein belongs to the ETS family. Sumoylated. Post-translationally, phosphorylated at Ser-191 and Ser-216 by RPS6KA1 and RPS6KA5; phosphorylation activates transcriptional activity. In terms of tissue distribution, abundant in kidney. Moderate levels seen in the heart, brain, lung, embryo and lower levels seen in spleen, intestine, testis and thymus.

Its subcellular location is the nucleus. Functionally, transcriptional activator that binds to DNA sequences containing the consensus pentanucleotide 5'-CGGA[AT]-3'. Required for olfactory dopaminergic neuron differentiation; may directly activate expression of tyrosine hydroxylase (TH). The sequence is that of ETS translocation variant 1 from Mus musculus (Mouse).